A 318-amino-acid chain; its full sequence is Protein OPG137 (318 aa).

The stretch at 145-172 forms a coiled coil; it reads VYDKDKRIQMLEDEVVNLRNQRSNTKSS.

Belongs to the orthopoxvirus OPG137 family. In terms of assembly, homomultimer. Interacts with OPG160. In terms of processing, phosphorylated by a OPG054-independent mechanism.

The protein localises to the host cytoplasm. In terms of biological role, required for viral crescent formation early during virus morphogenesis. The sequence is that of Protein OPG137 (OPG137) from Vaccinia virus (strain Western Reserve) (VACV).